We begin with the raw amino-acid sequence, 442 residues long: Dihydrolipoyllysine-residue acetyltransferase component of pyruvate dehydrogenase complex (442 aa).

A Lipoyl-binding domain is found at 2–77 (AFEFKLPDIG…TVGQTIITFD (76 aa)). K43 carries the post-translational modification N6-lipoyllysine. The segment covering 84-97 (LQFKGSDESDDAKT) has biased composition (basic and acidic residues). The segment at 84 to 136 (LQFKGSDESDDAKTEAQVQSTAEAGQDVAKEEQAQEPAKATGAGQQDQAEVDP) is disordered. Positions 141–178 (IAMPSVRKYAREKGVDIRKVTGSGNNGRVVKEDIDSFV) constitute a Peripheral subunit-binding (PSBD) domain. The segment covering 182–208 (AQEAAPQETAAPQETAAKPAAAPAPEG) has biased composition (low complexity). Positions 182 to 215 (AQEAAPQETAAPQETAAKPAAAPAPEGEFPETRE) are disordered. Residue H413 is part of the active site.

Belongs to the 2-oxoacid dehydrogenase family. Forms a 24-polypeptide structural core with octahedral symmetry. Requires (R)-lipoate as cofactor.

The enzyme catalyses N(6)-[(R)-dihydrolipoyl]-L-lysyl-[protein] + acetyl-CoA = N(6)-[(R)-S(8)-acetyldihydrolipoyl]-L-lysyl-[protein] + CoA. Functionally, the pyruvate dehydrogenase complex catalyzes the overall conversion of pyruvate to acetyl-CoA and CO(2). It contains multiple copies of three enzymatic components: pyruvate dehydrogenase (E1), dihydrolipoamide acetyltransferase (E2) and lipoamide dehydrogenase (E3). The B.subtilis PDH complex also possesses branched-chain 2-oxoacid dehydrogenase (BCDH) activity. This is Dihydrolipoyllysine-residue acetyltransferase component of pyruvate dehydrogenase complex (pdhC) from Bacillus subtilis (strain 168).